We begin with the raw amino-acid sequence, 832 residues long: Prickle-like protein 1-B (832 aa).

In terms of domain architecture, PET spans 14-122 (FGCQRSSTSD…NIKMLSRAVM (109 aa)). 3 LIM zinc-binding domains span residues 124 to 188 (AMCE…ELLK), 189 to 249 (PRCS…HYAE), and 250 to 313 (YCES…EDVH). 4 disordered regions span residues 312–346 (VHAS…ADQC), 428–455 (QQPS…QRNN), 602–701 (ICQE…KERN), and 766–832 (CSSS…CIIS). 2 stretches are compositionally biased toward basic and acidic residues: residues 432-453 (EDNR…DLQR) and 603-614 (CQEKPPPEEKPM). Composition is skewed to basic residues over residues 669–680 (RPHHHRRRKSRK) and 816–832 (TKSK…CIIS). Cys-829 carries the post-translational modification Cysteine methyl ester. Residue Cys-829 is the site of S-farnesyl cysteine attachment. Positions 830 to 832 (IIS) are cleaved as a propeptide — removed in mature form.

Belongs to the prickle / espinas / testin family. In terms of assembly, interacts with dvl2/dsh and mapk8/jnk1. As to expression, expressed in the dorsal marginal zone of early gastrulae (stage 10). As gastrulation proceeds, expression expands to include the lateral and ventral marginal zones, excluding the few rows of cells above the blastopore lip. Expression moves dorsally with gastrulation cell movements, and by the end of gastrulation expression is seen in dorsal mesoderm and posterior but not anterior neural ectoderm. Expression becomes down-regulated in mesoderm but remains strong in posterior ectoderm through the neurula stages. During tailbud stages, expressed in the pronephric duct, tailbud, tailtip and forming somites. In the most posterior regions, expressed in notochord and in the floorplate of the neural tube with weak expression in the roofplate. At stage 30, expressed in a complex pattern in the head including strong expression in the lens and otic vesicle.

It is found in the cell membrane. In terms of biological role, acts in a planar cell polarity (PCP) complex; polarization along the apical/basal axis of epithelial cells. Regulates the polarized assembly of fibronectrin on the surface of the mesoderm during gastrulation. Essential for gastrulation cell movements, cooperating with dvl2/dsh to activate jnk. Acts together with tes to control axial elongation. This Xenopus laevis (African clawed frog) protein is Prickle-like protein 1-B (prickle1-b).